A 292-amino-acid chain; its full sequence is 4-hydroxybenzoate octaprenyltransferase (292 aa).

Transmembrane regions (helical) follow at residues 24-44 (IGTL…NAGM), 47-67 (LTNF…GCVI), 97-117 (AISL…MLSV), 119-139 (TILL…MKRY), 145-165 (VVLG…SINA), 171-191 (WLLF…YAMV), 214-234 (HIIG…GALN), 238-258 (LSYW…QVLI), and 270-290 (FLNN…SYPV).

Belongs to the UbiA prenyltransferase family. Mg(2+) is required as a cofactor.

The protein resides in the cell inner membrane. The enzyme catalyses all-trans-octaprenyl diphosphate + 4-hydroxybenzoate = 4-hydroxy-3-(all-trans-octaprenyl)benzoate + diphosphate. Its pathway is cofactor biosynthesis; ubiquinone biosynthesis. Its function is as follows. Catalyzes the prenylation of para-hydroxybenzoate (PHB) with an all-trans polyprenyl group. Mediates the second step in the final reaction sequence of ubiquinone-8 (UQ-8) biosynthesis, which is the condensation of the polyisoprenoid side chain with PHB, generating the first membrane-bound Q intermediate 3-octaprenyl-4-hydroxybenzoate. The polypeptide is 4-hydroxybenzoate octaprenyltransferase (Pseudoalteromonas translucida (strain TAC 125)).